Reading from the N-terminus, the 278-residue chain is Probable septum site-determining protein MinC (278 aa).

It belongs to the MinC family. As to quaternary structure, interacts with MinD and FtsZ.

In terms of biological role, cell division inhibitor that blocks the formation of polar Z ring septums. Rapidly oscillates between the poles of the cell to destabilize FtsZ filaments that have formed before they mature into polar Z rings. Prevents FtsZ polymerization. The chain is Probable septum site-determining protein MinC from Gloeobacter violaceus (strain ATCC 29082 / PCC 7421).